Consider the following 126-residue polypeptide: Fluoride-specific ion channel FluC (126 aa).

A run of 4 helical transmembrane segments spans residues Val-5 to Trp-25, Trp-35 to Phe-55, Phe-68 to Phe-88, and Ala-99 to Leu-119. Residues Gly-75 and Thr-78 each coordinate Na(+).

It belongs to the fluoride channel Fluc/FEX (TC 1.A.43) family.

Its subcellular location is the cell inner membrane. The enzyme catalyses fluoride(in) = fluoride(out). With respect to regulation, na(+) is not transported, but it plays an essential structural role and its presence is essential for fluoride channel function. Its function is as follows. Fluoride-specific ion channel. Important for reducing fluoride concentration in the cell, thus reducing its toxicity. This chain is Fluoride-specific ion channel FluC, found in Marinobacter nauticus (strain ATCC 700491 / DSM 11845 / VT8) (Marinobacter aquaeolei).